The chain runs to 274 residues: Shikimate dehydrogenase (NADP(+)) (274 aa).

Residues 20 to 22 and T68 each bind shikimate; that span reads SKS. Catalysis depends on K72, which acts as the Proton acceptor. NADP(+) is bound at residue D84. 2 residues coordinate shikimate: N93 and D109. NADP(+) contacts are provided by residues 131 to 135 and L217; that span reads GAGGA. Y219 is a shikimate binding site. G240 lines the NADP(+) pocket.

It belongs to the shikimate dehydrogenase family. As to quaternary structure, homodimer.

It catalyses the reaction shikimate + NADP(+) = 3-dehydroshikimate + NADPH + H(+). Its pathway is metabolic intermediate biosynthesis; chorismate biosynthesis; chorismate from D-erythrose 4-phosphate and phosphoenolpyruvate: step 4/7. In terms of biological role, involved in the biosynthesis of the chorismate, which leads to the biosynthesis of aromatic amino acids. Catalyzes the reversible NADPH linked reduction of 3-dehydroshikimate (DHSA) to yield shikimate (SA). This Sphingopyxis alaskensis (strain DSM 13593 / LMG 18877 / RB2256) (Sphingomonas alaskensis) protein is Shikimate dehydrogenase (NADP(+)).